A 304-amino-acid chain; its full sequence is Dihydroorotate dehydrogenase B (NAD(+)), catalytic subunit (304 aa).

Residues S21 and 45–46 (KA) contribute to the FMN site. Residues K45 and 69–73 (NAIGL) contribute to the substrate site. FMN-binding residues include N99 and N127. N127 serves as a coordination point for substrate. Residue C130 is the Nucleophile of the active site. Positions 165 and 191 each coordinate FMN. 192-193 (NT) contributes to the substrate binding site. Residues G217, 243–244 (GG), and 265–266 (GT) each bind FMN.

Belongs to the dihydroorotate dehydrogenase family. Type 1 subfamily. In terms of assembly, heterotetramer of 2 PyrK and 2 PyrD type B subunits. The cofactor is FMN.

The protein localises to the cytoplasm. The catalysed reaction is (S)-dihydroorotate + NAD(+) = orotate + NADH + H(+). It participates in pyrimidine metabolism; UMP biosynthesis via de novo pathway; orotate from (S)-dihydroorotate (NAD(+) route): step 1/1. Its function is as follows. Catalyzes the conversion of dihydroorotate to orotate with NAD(+) as electron acceptor. The protein is Dihydroorotate dehydrogenase B (NAD(+)), catalytic subunit (pyrD) of Listeria monocytogenes serotype 4b (strain F2365).